The following is a 228-amino-acid chain: uncharacterized protein (228 aa).

Residues 194-228 (SRRADEHPAPSTEPHAAAVAPEPDFMAEPIPALEE) form a disordered region.

This is an uncharacterized protein from Treponema pallidum (strain Nichols).